The chain runs to 650 residues: ATP-dependent DNA helicase PIF1 (650 aa).

The interval 14–192 (MPSSTEAATD…ALEKRPMESQ (179 aa)) is PINT. 2 positions are modified to phosphoserine: Ser40 and Ser164. A disordered region spans residues 171-199 (LQRAAATKAPDSALEKRPMESQTSTEAPR). 237-244 (GSAGTGKS) lines the ATP pocket. The DNA-binding element occupies 586–605 (QAYVALSRARSLQGLRVLDF). The interval 631 to 650 (LESQDDEEANSDLENMDPNL) is disordered. Positions 633-650 (SQDDEEANSDLENMDPNL) are enriched in acidic residues.

Belongs to the helicase family. PIF1 subfamily. As to quaternary structure, monomer. Interacts with telomerase. It depends on Mg(2+) as a cofactor.

It is found in the nucleus. The protein resides in the mitochondrion. The catalysed reaction is Couples ATP hydrolysis with the unwinding of duplex DNA at the replication fork by translocating in the 5'-3' direction. This creates two antiparallel DNA single strands (ssDNA). The leading ssDNA polymer is the template for DNA polymerase III holoenzyme which synthesizes a continuous strand.. The enzyme catalyses ATP + H2O = ADP + phosphate + H(+). Its function is as follows. DNA-dependent ATPase and 5'-3' DNA helicase required for the maintenance of both mitochondrial and nuclear genome stability. Efficiently unwinds G-quadruplex (G4) DNA structures and forked RNA-DNA hybrids. Resolves G4 structures, preventing replication pausing and double-strand breaks (DSBs) at G4 motifs. Involved in the maintenance of telomeric DNA. Inhibits telomere elongation, de novo telomere formation and telomere addition to DSBs via catalytic inhibition of telomerase. Reduces the processivity of telomerase by displacing active telomerase from DNA ends. Releases telomerase by unwinding the short telomerase RNA/telomeric DNA hybrid that is the intermediate in the telomerase reaction. Possesses an intrinsic strand annealing activity. This is ATP-dependent DNA helicase PIF1 from Mus musculus (Mouse).